The sequence spans 763 residues: U3 small nucleolar RNA-associated protein 25 homolog (763 aa).

The disordered stretch occupies residues Met-1 to Asp-164. Promotes p53/TP53 degradation regions lie at residues Met-1–Thr-190 and Val-580–Glu-642. Position 10 is a phosphoserine (Ser-10). A compositionally biased stretch (basic and acidic residues) spans Arg-25–Lys-43. Phosphoserine is present on residues Ser-52, Ser-60, and Ser-64. Residues Asp-54–Ser-70 show a composition bias toward basic and acidic residues. Acidic residues predominate over residues Glu-84–Gly-119. The represses p53/TP53 degradation stretch occupies residues Leu-643–Tyr-704.

Belongs to the UTP25 family. As to quaternary structure, interacts with CAPN3; the interaction is required for CAPN3 translocation to the nucleolus. In terms of processing, phosphorylated. Phosphorylation is required to promote p53/TP53 degradation in the nucleolus which promotes cell cycle progression and liver development.

It localises to the nucleus. Its subcellular location is the nucleolus. Its function is as follows. Component of the ribosomal small subunit processome for the biogenesis of ribosomes, functions in pre-ribosomal RNA (pre-rRNA) processing. Essential for embryonic development in part through the regulation of p53 pathway. Controls the expansion growth of digestive organs and liver. Also involved in the sympathetic neuronal development. Mediates, with CAPN3, the proteasome-independent degradation of p53/TP53. The chain is U3 small nucleolar RNA-associated protein 25 homolog from Rattus norvegicus (Rat).